The following is a 74-amino-acid chain: Cytochrome c oxidase assembly factor 5 (74 aa).

The 39-residue stretch at 27 to 65 (QSACVLQEGKSPRQCLKEGNCRALQYSFFECKRSMLDAR) folds into the CHCH domain. The short motif at 30 to 41 (CVLQEGKSPRQC) is the Cx10C motif element. 2 disulfide bridges follow: Cys-30-Cys-57 and Cys-41-Cys-47. Position 37 is a phosphoserine (Ser-37). The Cx9C motif motif lies at 47 to 57 (CRALQYSFFEC).

The protein belongs to the PET191 family.

Functionally, involved in an early step of the mitochondrial complex IV assembly process. The polypeptide is Cytochrome c oxidase assembly factor 5 (Coa5) (Mus musculus (Mouse)).